Consider the following 148-residue polypeptide: Deoxyuridine 5'-triphosphate nucleotidohydrolase (148 aa).

Residues 67–69 (RSG), Asn80, 84–86 (LID), and Met94 contribute to the substrate site.

This sequence belongs to the dUTPase family. The cofactor is Mg(2+).

It carries out the reaction dUTP + H2O = dUMP + diphosphate + H(+). The protein operates within pyrimidine metabolism; dUMP biosynthesis; dUMP from dCTP (dUTP route): step 2/2. In terms of biological role, this enzyme is involved in nucleotide metabolism: it produces dUMP, the immediate precursor of thymidine nucleotides and it decreases the intracellular concentration of dUTP so that uracil cannot be incorporated into DNA. In Burkholderia lata (strain ATCC 17760 / DSM 23089 / LMG 22485 / NCIMB 9086 / R18194 / 383), this protein is Deoxyuridine 5'-triphosphate nucleotidohydrolase.